Reading from the N-terminus, the 152-residue chain is Protein-export protein SecB (152 aa).

This sequence belongs to the SecB family. In terms of assembly, homotetramer, a dimer of dimers. One homotetramer interacts with 1 SecA dimer.

The protein resides in the cytoplasm. In terms of biological role, one of the proteins required for the normal export of preproteins out of the cell cytoplasm. It is a molecular chaperone that binds to a subset of precursor proteins, maintaining them in a translocation-competent state. It also specifically binds to its receptor SecA. This is Protein-export protein SecB from Rickettsia bellii (strain RML369-C).